The following is a 118-amino-acid chain: Large ribosomal subunit protein bL20 (118 aa).

This sequence belongs to the bacterial ribosomal protein bL20 family.

In terms of biological role, binds directly to 23S ribosomal RNA and is necessary for the in vitro assembly process of the 50S ribosomal subunit. It is not involved in the protein synthesizing functions of that subunit. In Lacticaseibacillus casei (strain BL23) (Lactobacillus casei), this protein is Large ribosomal subunit protein bL20.